The sequence spans 130 residues: Large ribosomal subunit protein bL20 (130 aa).

Belongs to the bacterial ribosomal protein bL20 family.

Its function is as follows. Binds directly to 23S ribosomal RNA and is necessary for the in vitro assembly process of the 50S ribosomal subunit. It is not involved in the protein synthesizing functions of that subunit. In Clavibacter michiganensis subsp. michiganensis (strain NCPPB 382), this protein is Large ribosomal subunit protein bL20.